Here is a 431-residue protein sequence, read N- to C-terminus: Glycerol-3-phosphate dehydrogenase [NAD(P)+] (431 aa).

Residues serine 79, phenylalanine 80, arginine 100, and lysine 173 each coordinate NADPH. The sn-glycerol 3-phosphate site is built by lysine 173 and glycine 201. Residue alanine 205 participates in NADPH binding. Residues lysine 256, aspartate 309, serine 319, arginine 320, and asparagine 321 each contribute to the sn-glycerol 3-phosphate site. Residue lysine 256 is the Proton acceptor of the active site. NADPH is bound at residue arginine 320. Glutamate 346 serves as a coordination point for NADPH.

This sequence belongs to the NAD-dependent glycerol-3-phosphate dehydrogenase family.

Its subcellular location is the cytoplasm. The catalysed reaction is sn-glycerol 3-phosphate + NAD(+) = dihydroxyacetone phosphate + NADH + H(+). The enzyme catalyses sn-glycerol 3-phosphate + NADP(+) = dihydroxyacetone phosphate + NADPH + H(+). Its pathway is membrane lipid metabolism; glycerophospholipid metabolism. Functionally, catalyzes the reduction of the glycolytic intermediate dihydroxyacetone phosphate (DHAP) to sn-glycerol 3-phosphate (G3P), the key precursor for phospholipid synthesis. This is Glycerol-3-phosphate dehydrogenase [NAD(P)+] from Psychrobacter cryohalolentis (strain ATCC BAA-1226 / DSM 17306 / VKM B-2378 / K5).